Reading from the N-terminus, the 45-residue chain is Mu-conotoxin-like Cal 12.1.1d (45 aa).

Disulfide bonds link cysteine 3–cysteine 16, cysteine 11–cysteine 28, cysteine 18–cysteine 33, and cysteine 27–cysteine 39. Tryptophan 17 carries the 6'-bromotryptophan modification. Glutamate 21 bears the 4-carboxyglutamate mark. Proline 23 is modified (4-hydroxyproline). 2 positions are modified to 6'-bromotryptophan: tryptophan 37 and tryptophan 38. Proline 40 carries the post-translational modification 4-hydroxyproline. Tryptophan 44 carries the post-translational modification 6'-bromotryptophan.

As to expression, expressed by the venom duct.

The protein localises to the secreted. Functionally, mu-conotoxins block voltage-gated sodium channels. This toxin reversibly blocks voltage-gated sodium channel in cephalopods, with no alteration in the voltage dependence of sodium conductance or on the kinetics of inactivation. This Californiconus californicus (California cone) protein is Mu-conotoxin-like Cal 12.1.1d.